The following is a 139-amino-acid chain: ATP synthase epsilon chain (139 aa).

The protein belongs to the ATPase epsilon chain family. In terms of assembly, F-type ATPases have 2 components, CF(1) - the catalytic core - and CF(0) - the membrane proton channel. CF(1) has five subunits: alpha(3), beta(3), gamma(1), delta(1), epsilon(1). CF(0) has three main subunits: a, b and c.

It is found in the cell inner membrane. Its function is as follows. Produces ATP from ADP in the presence of a proton gradient across the membrane. In Nitrosospira multiformis (strain ATCC 25196 / NCIMB 11849 / C 71), this protein is ATP synthase epsilon chain.